A 468-amino-acid chain; its full sequence is UDP-N-acetylmuramate--L-alanine ligase (468 aa).

114-120 (GTHGKTT) serves as a coordination point for ATP.

Belongs to the MurCDEF family.

The protein resides in the cytoplasm. It carries out the reaction UDP-N-acetyl-alpha-D-muramate + L-alanine + ATP = UDP-N-acetyl-alpha-D-muramoyl-L-alanine + ADP + phosphate + H(+). Its pathway is cell wall biogenesis; peptidoglycan biosynthesis. Its function is as follows. Cell wall formation. This chain is UDP-N-acetylmuramate--L-alanine ligase, found in Methylorubrum extorquens (strain PA1) (Methylobacterium extorquens).